Here is a 445-residue protein sequence, read N- to C-terminus: 6-phosphogluconate dehydrogenase, decarboxylating (445 aa).

Residues 1–4 (AVMG), 22–24 (NRS), 63–65 (VKA), and Asn91 contribute to the NADP(+) site. Residues Asn91 and 117–119 (SGG) each bind substrate. Lys172 functions as the Proton acceptor in the catalytic mechanism. Residue 175–176 (HN) coordinates substrate. Residue Glu179 is the Proton donor of the active site. Positions 180, 249, 276, 434, and 440 each coordinate substrate.

It belongs to the 6-phosphogluconate dehydrogenase family. Homodimer.

It catalyses the reaction 6-phospho-D-gluconate + NADP(+) = D-ribulose 5-phosphate + CO2 + NADPH. The protein operates within carbohydrate degradation; pentose phosphate pathway; D-ribulose 5-phosphate from D-glucose 6-phosphate (oxidative stage): step 3/3. In terms of biological role, catalyzes the oxidative decarboxylation of 6-phosphogluconate to ribulose 5-phosphate and CO(2), with concomitant reduction of NADP to NADPH. The polypeptide is 6-phosphogluconate dehydrogenase, decarboxylating (gnd) (Shigella boydii).